The sequence spans 713 residues: Polyribonucleotide nucleotidyltransferase (713 aa).

Mg(2+) contacts are provided by D488 and D494. In terms of domain architecture, KH spans 555–614 (PRIEVMNIPTDKIRDVIGSGGKVIREIVEKTGAKINIEDDGTVKIASSNGKEIEAAKKWI). The 69-residue stretch at 624–692 (GEIYEGTVVK…ERGKVRLSMK (69 aa)) folds into the S1 motif domain.

The protein belongs to the polyribonucleotide nucleotidyltransferase family. The cofactor is Mg(2+).

The protein localises to the cytoplasm. The enzyme catalyses RNA(n+1) + phosphate = RNA(n) + a ribonucleoside 5'-diphosphate. Its function is as follows. Involved in mRNA degradation. Catalyzes the phosphorolysis of single-stranded polyribonucleotides processively in the 3'- to 5'-direction. The sequence is that of Polyribonucleotide nucleotidyltransferase from Brucella anthropi (strain ATCC 49188 / DSM 6882 / CCUG 24695 / JCM 21032 / LMG 3331 / NBRC 15819 / NCTC 12168 / Alc 37) (Ochrobactrum anthropi).